The sequence spans 805 residues: Leucine--tRNA ligase (805 aa).

Positions 39-50 (PYPSGKGLHVGH) match the 'HIGH' region motif. Residues 583–587 (KMSKS) carry the 'KMSKS' region motif. Lys586 contributes to the ATP binding site.

The protein belongs to the class-I aminoacyl-tRNA synthetase family.

It is found in the cytoplasm. The catalysed reaction is tRNA(Leu) + L-leucine + ATP = L-leucyl-tRNA(Leu) + AMP + diphosphate. The chain is Leucine--tRNA ligase from Mycoplasmoides gallisepticum (strain R(low / passage 15 / clone 2)) (Mycoplasma gallisepticum).